The sequence spans 118 residues: UPF0295 protein BcerKBAB4_0454 (118 aa).

2 consecutive transmembrane segments (helical) span residues 12-32 (IRTF…LGVF) and 43-63 (FMMV…WIGM).

Belongs to the UPF0295 family.

It localises to the cell membrane. This Bacillus mycoides (strain KBAB4) (Bacillus weihenstephanensis) protein is UPF0295 protein BcerKBAB4_0454.